A 417-amino-acid chain; its full sequence is Gamma-glutamyl phosphate reductase (417 aa).

The protein belongs to the gamma-glutamyl phosphate reductase family.

Its subcellular location is the cytoplasm. The enzyme catalyses L-glutamate 5-semialdehyde + phosphate + NADP(+) = L-glutamyl 5-phosphate + NADPH + H(+). It functions in the pathway amino-acid biosynthesis; L-proline biosynthesis; L-glutamate 5-semialdehyde from L-glutamate: step 2/2. Catalyzes the NADPH-dependent reduction of L-glutamate 5-phosphate into L-glutamate 5-semialdehyde and phosphate. The product spontaneously undergoes cyclization to form 1-pyrroline-5-carboxylate. The chain is Gamma-glutamyl phosphate reductase from Proteus mirabilis (strain HI4320).